Here is a 49-residue protein sequence, read N- to C-terminus: DNA-directed RNA polymerase subunit Rpo12 (49 aa).

Residues cysteine 11, cysteine 27, and cysteine 30 each coordinate Zn(2+).

It belongs to the archaeal Rpo12/eukaryotic RPC10 RNA polymerase subunit family. Part of the RNA polymerase complex. Zn(2+) serves as cofactor.

The protein localises to the cytoplasm. The enzyme catalyses RNA(n) + a ribonucleoside 5'-triphosphate = RNA(n+1) + diphosphate. DNA-dependent RNA polymerase (RNAP) catalyzes the transcription of DNA into RNA using the four ribonucleoside triphosphates as substrates. In Pyrococcus horikoshii (strain ATCC 700860 / DSM 12428 / JCM 9974 / NBRC 100139 / OT-3), this protein is DNA-directed RNA polymerase subunit Rpo12.